We begin with the raw amino-acid sequence, 222 residues long: ATP-dependent Clp protease proteolytic subunit (222 aa).

The active-site Nucleophile is S125. Residue H150 is part of the active site.

Belongs to the peptidase S14 family. In terms of assembly, fourteen ClpP subunits assemble into 2 heptameric rings which stack back to back to give a disk-like structure with a central cavity, resembling the structure of eukaryotic proteasomes.

The protein resides in the cytoplasm. It carries out the reaction Hydrolysis of proteins to small peptides in the presence of ATP and magnesium. alpha-casein is the usual test substrate. In the absence of ATP, only oligopeptides shorter than five residues are hydrolyzed (such as succinyl-Leu-Tyr-|-NHMec, and Leu-Tyr-Leu-|-Tyr-Trp, in which cleavage of the -Tyr-|-Leu- and -Tyr-|-Trp bonds also occurs).. Functionally, cleaves peptides in various proteins in a process that requires ATP hydrolysis. Has a chymotrypsin-like activity. Plays a major role in the degradation of misfolded proteins. The sequence is that of ATP-dependent Clp protease proteolytic subunit from Porphyromonas gingivalis (strain ATCC BAA-308 / W83).